A 419-amino-acid chain; its full sequence is UDP-arabinose 4-epimerase 1 (419 aa).

Residues 1 to 21 (MFSFGRARSQGRQNRSMSLGG) form a disordered region. The Cytoplasmic portion of the chain corresponds to 1 to 32 (MFSFGRARSQGRQNRSMSLGGLDYADPKKKNN). Residues 33–51 (YLGKILLTASLTALCIFML) traverse the membrane as a helical; Signal-anchor for type II membrane protein segment. Residues 52–419 (KQSPTFNTPS…GLTTSSVSVY (368 aa)) are Lumenal-facing. NAD(+) is bound at residue 72–103 (HVLVTGGAGYIGSHAALRLLKESYRVTIVDNL). The Proton acceptor role is filled by Tyr220.

Belongs to the NAD(P)-dependent epimerase/dehydratase family. It depends on NAD(+) as a cofactor. In terms of tissue distribution, high expression in roots. Also found in leaves, stems, flowers, and siliques.

The protein resides in the golgi apparatus. The protein localises to the golgi stack membrane. The catalysed reaction is UDP-beta-L-arabinopyranose = UDP-alpha-D-xylose. It participates in nucleotide-sugar biosynthesis; UDP-L-arabinose biosynthesis; UDP-L-arabinose from UDP-alpha-D-xylose: step 1/1. It functions in the pathway cell wall biogenesis; cell wall polysaccharide biosynthesis. Acts as a UDP-D-xylose 4-epimerase but lacks both UDP-D-glucose and UDP-D-glucuronic acid 4-epimerase activities in vitro. The chain is UDP-arabinose 4-epimerase 1 from Arabidopsis thaliana (Mouse-ear cress).